Reading from the N-terminus, the 444-residue chain is Exopolygalacturonase clone GBGA483 (444 aa).

The first 23 residues, 1–23 (MVGSHKASGVLLVLLVVMATTIA), serve as a signal peptide directing secretion. 5 PbH1 repeats span residues 220–246 (CKNI…HIGR), 247–268 (SNGV…SIGD), 270–290 (TENL…SIGS), 300–321 (VKGV…RIKT), and 330–351 (ASNI…LIDQ). The N-linked (GlcNAc...) asparagine glycan is linked to Asn-222. The Proton donor role is filled by Asp-261. A disulfide bond links Cys-263 and Cys-280. His-284 is an active-site residue. A glycan (N-linked (GlcNAc...) asparagine) is linked at Asn-342. Disulfide bonds link Cys-391-Cys-397 and Cys-420-Cys-436.

The protein belongs to the glycosyl hydrolase 28 family.

It localises to the secreted. The protein localises to the cell wall. It catalyses the reaction [(1-&gt;4)-alpha-D-galacturonosyl](n) + H2O = alpha-D-galacturonate + [(1-&gt;4)-alpha-D-galacturonosyl](n-1). May function in depolymerizing pectin during pollen development, germination, and tube growth. Acts as an exo-polygalacturonase. This chain is Exopolygalacturonase clone GBGA483, found in Arabidopsis thaliana (Mouse-ear cress).